The sequence spans 245 residues: 5-oxoprolinase subunit A (245 aa).

The protein belongs to the LamB/PxpA family. As to quaternary structure, forms a complex composed of PxpA, PxpB and PxpC.

The catalysed reaction is 5-oxo-L-proline + ATP + 2 H2O = L-glutamate + ADP + phosphate + H(+). Functionally, catalyzes the cleavage of 5-oxoproline to form L-glutamate coupled to the hydrolysis of ATP to ADP and inorganic phosphate. The polypeptide is 5-oxoprolinase subunit A (Cronobacter sakazakii (strain ATCC BAA-894) (Enterobacter sakazakii)).